A 110-amino-acid polypeptide reads, in one-letter code: Large ribosomal subunit protein uL22 (110 aa).

Belongs to the universal ribosomal protein uL22 family. As to quaternary structure, part of the 50S ribosomal subunit.

This protein binds specifically to 23S rRNA; its binding is stimulated by other ribosomal proteins, e.g. L4, L17, and L20. It is important during the early stages of 50S assembly. It makes multiple contacts with different domains of the 23S rRNA in the assembled 50S subunit and ribosome. In terms of biological role, the globular domain of the protein is located near the polypeptide exit tunnel on the outside of the subunit, while an extended beta-hairpin is found that lines the wall of the exit tunnel in the center of the 70S ribosome. This chain is Large ribosomal subunit protein uL22, found in Geobacter metallireducens (strain ATCC 53774 / DSM 7210 / GS-15).